We begin with the raw amino-acid sequence, 573 residues long: Poly(ribitol-phosphate) beta-N-acetylglucosaminyltransferase TarS (573 aa).

Residues Pro-9, Asp-41, Asn-68, Arg-76, 92–94 (DSD), Arg-127, and Glu-178 contribute to the UDP-N-acetyl-alpha-D-glucosamine site. Mn(2+) is bound at residue Asp-94. Asp-179 functions as the Proton acceptor in the catalytic mechanism. Residues Arg-207 and 211–213 (HMS) contribute to the UDP-N-acetyl-alpha-D-glucosamine site.

Belongs to the glycosyltransferase 2 family. In terms of assembly, homotrimer. Mn(2+) is required as a cofactor.

The enzyme catalyses 4-O-[(D-ribitylphospho)(n)-di{(2R)-glycerylphospho}]-N-acetyl-beta-D-mannosaminyl-(1-&gt;4)-N-acetyl-alpha-D-glucosaminyl di-trans,octa-cis-undecaprenyl diphosphate + n UDP-N-acetyl-alpha-D-glucosamine = 4-O-([2-N-acetyl-beta-D-glucosaminyl-1-D-ribitylphospho](n)-di{[2R]-1-glycerylphospho})-N-acetyl-beta-D-mannosaminyl-(1-&gt;4)-N-acetyl-alpha-D-glucosaminyl di-trans,octa-cis-undecaprenyl diphosphate + n UDP + n H(+). Its pathway is cell wall biogenesis; poly(ribitol phosphate) teichoic acid biosynthesis. Functionally, attaches beta-O-GlcNAc (beta-O-N-acetyl-D-glucosamine) residues to the C4 position of poly(RboP)-wall teichoic acids (WTAs). Mediates beta-lactam resistance in methicillin resistant Staphylococcus aureus (MRSA) strains. The polypeptide is Poly(ribitol-phosphate) beta-N-acetylglucosaminyltransferase TarS (Staphylococcus aureus (strain Mu50 / ATCC 700699)).